A 263-amino-acid polypeptide reads, in one-letter code: Lens fiber major intrinsic protein (263 aa).

Residues 1–9 (MWELRSASF) lie on the Cytoplasmic side of the membrane. Residues 10–29 (WRAIFAEFFATLFYVFFGLG) traverse the membrane as a helical segment. Over 30–41 (SSLRWAPGPLHV) the chain is Extracellular. A helical transmembrane segment spans residues 42 to 59 (LQVALAFGLALATLVQTV). At 60 to 61 (GH) the chain is on the cytoplasmic side. Residues 62–77 (ISGAHVNPAVTFAFLV) constitute an intramembrane region (discontinuously helical). Residues 68–70 (NPA) carry the NPA 1 motif. The Cytoplasmic segment spans residues 78 to 82 (GSQMS). A helical transmembrane segment spans residues 83-106 (LLRAFCYIAAQLLGAVAGAAVLYS). The Extracellular portion of the chain corresponds to 107 to 127 (VTPPAVRGNLALNTLHAGVSV). A helical transmembrane segment spans residues 128–148 (GQATTVEIFLTLQFVLCIFAT). Over 149 to 156 (YDERRNGR) the chain is Cytoplasmic. A helical membrane pass occupies residues 157 to 175 (MGSVALAVGFSLTLGHLFG). Residues 176-178 (MYY) lie on the Extracellular side of the membrane. An intramembrane region (discontinuously helical) is located at residues 179–193 (TGAGMNPARSFAPAI). The NPA 2 motif lies at 184–186 (NPA). Over 194–200 (LTRNFSN) the chain is Extracellular. The chain crosses the membrane as a helical span at residues 201 to 222 (HWVYWVGPIIGGGLGSLLYDFL). Residues 223–263 (LFPRLKSVSERLSILKGARPSDSNGQPEGTGEPVELKTQAL) lie on the Cytoplasmic side of the membrane. Residues 227 to 237 (LKSVSERLSIL) form an interaction with CALM region. Serine 235, serine 243, and serine 245 each carry phosphoserine. Residues 240–263 (ARPSDSNGQPEGTGEPVELKTQAL) form a disordered region. The residue at position 246 (asparagine 246) is a Deamidated asparagine.

Belongs to the MIP/aquaporin (TC 1.A.8) family. In terms of assembly, homotetramer; each monomer provides an independent water pore. Two homotetramers on opposing membranes can dimerize, forming a cell-cell junction. Interacts with CALM; the calcium-calmodulin/CALM complex interacts with the cytoplasmic domains of two aquaporins, leading to channel closure. Interacts with BFSP1 (via C-terminus); prevents calcium-dependent inhibition of the water channel activity. In terms of processing, subject to partial proteolytic cleavage in the eye lens core. Partial proteolysis promotes interactions between tetramers from adjoining membranes. Fatty acylated at Met-1 and Lys-238. The acyl modifications, in decreasing order of ion abundance, are: oleoyl (C18:1) &gt; palmitoyl (C16:0) &gt; stearoyl (C18:0) &gt; eicosenoyl (C20:1) &gt; dihomo-gamma-linolenoyl (C20:3) &gt; palmitoleoyl (C16:1) &gt; eicosadienoyl (C20:2).

It is found in the cell membrane. Its subcellular location is the cell junction. The enzyme catalyses H2O(in) = H2O(out). Its activity is regulated as follows. The water channel activity is inhibited by calcium through calmodulin/CALM. In terms of biological role, aquaporins form homotetrameric transmembrane channels, with each monomer independently mediating water transport across the plasma membrane along its osmotic gradient. Specifically expressed in lens fiber cells, this aquaporin is crucial for maintaining lens water homeostasis and transparency. Beyond water permeability, it also acts as a cell-to-cell adhesion molecule, forming thin junctions between lens fiber cells that are essential for maintaining the ordered structure and transparency of the lens. The chain is Lens fiber major intrinsic protein from Rattus norvegicus (Rat).